The chain runs to 539 residues: Acid-sensing ion channel 4 (539 aa).

The Cytoplasmic segment spans residues 1-68 (MPIEIVCKIK…GPGPHGLRRT (68 aa)). A helical transmembrane segment spans residues 69–89 (LWALALLTSLAAFLYQAAGLA). Topologically, residues 90–438 (RGYLTRPHLV…EQRAAYGLSA (349 aa)) are extracellular. 2 disulfides stabilise this stretch: cysteine 118–cysteine 202 and cysteine 180–cysteine 187. 2 N-linked (GlcNAc...) asparagine glycosylation sites follow: asparagine 191 and asparagine 243. Cystine bridges form between cysteine 296–cysteine 375, cysteine 318–cysteine 371, cysteine 322–cysteine 369, cysteine 331–cysteine 353, and cysteine 333–cysteine 345. Asparagine 376 is a glycosylation site (N-linked (GlcNAc...) asparagine). Residues 439 to 459 (LLGDLGGQMGLFIGASILTLL) form a helical membrane-spanning segment. The GAS motif; ion selectivity filter motif lies at 452 to 454 (GAS). Residues 460-539 (EILDYIYEVS…PGGLFEDFAC (80 aa)) lie on the Cytoplasmic side of the membrane. Residues 501–531 (EQSPCPSRGRVEGGGVSSLLPNHHHPHGPPG) are disordered.

Belongs to the amiloride-sensitive sodium channel (TC 1.A.6) family. ASIC4 subfamily. Homotrimer. Heterotrimer; with other ASIC proteins producing functional channels. Expressed in pituitary gland. Weakly expressed in brain, vestibular system and organ of Corti.

It is found in the cell membrane. Functionally, does not exhibit measurable stand-alone pH-gated sodium channel activity but may form pH-gated heterotrimeric sodium channels. Its activity could also depend on alternative gating mechanisms. The protein is Acid-sensing ion channel 4 of Homo sapiens (Human).